The sequence spans 182 residues: Dirigent protein 5 (182 aa).

The signal sequence occupies residues 1–23 (MVGQMKSFLFLFVFLVLTKTVIS). A disulfide bridge links Cys-35 with Cys-181. 2 N-linked (GlcNAc...) asparagine glycosylation sites follow: Asn-54 and Asn-118.

This sequence belongs to the plant dirigent protein family. Homodimer. In terms of tissue distribution, confined to shoot meristem, vascular region of cotyledons and siliques abscission zone.

The protein resides in the secreted. The protein localises to the extracellular space. Its subcellular location is the apoplast. In terms of biological role, dirigent proteins impart stereoselectivity on the phenoxy radical-coupling reaction, yielding optically active lignans from two molecules of coniferyl alcohol in the biosynthesis of lignans, flavonolignans, and alkaloids and thus plays a central role in plant secondary metabolism. Enantiocomplementary dirigent protein that mediates the laccase-catalyzed enantioselective oxidative phenol coupling of (E)-coniferyl alcohol to (-)-pinoresinol. The protein is Dirigent protein 5 (DIR5) of Arabidopsis thaliana (Mouse-ear cress).